The chain runs to 495 residues: Leucine aminopeptidase 2 (495 aa).

The first 21 residues, 1 to 21 (MKSQLLSLAVAVSTISQGVVG), serve as a signal peptide directing secretion. The region spanning 124 to 218 (PPANKIMAEL…EDGKNLASLV (95 aa)) is the PA domain. N142 and N235 each carry an N-linked (GlcNAc...) asparagine glycan. Positions 259 and 271 each coordinate Zn(2+). An N-linked (GlcNAc...) asparagine glycan is attached at N272. E303 serves as the catalytic Proton acceptor. Residues E304 and D332 each contribute to the Zn(2+) site. N352 carries N-linked (GlcNAc...) asparagine glycosylation. Zn(2+) is bound at residue H430.

Belongs to the peptidase M28 family. M28A subfamily. In terms of assembly, monomer. Zn(2+) serves as cofactor.

The protein resides in the secreted. Extracellular aminopeptidase that releases a wide variety of amino acids from natural peptides and contributes to pathogenicity. The sequence is that of Leucine aminopeptidase 2 (LAP2) from Trichophyton equinum (Horse ringworm fungus).